A 120-amino-acid polypeptide reads, in one-letter code: MIKGHGIDIEELVAIERAYLKNARFAKKVLTEAELSRFEELSGKRKIEFLAGRWAAKEAFSKAWGTGIGKLRFQDLEILNDRQGAPYFSRSPFTGKVWISLSHAAGLVTASVILEENDES.

Asp8 and Glu58 together coordinate Mg(2+).

This sequence belongs to the P-Pant transferase superfamily. AcpS family. It depends on Mg(2+) as a cofactor.

The protein localises to the cytoplasm. It carries out the reaction apo-[ACP] + CoA = holo-[ACP] + adenosine 3',5'-bisphosphate + H(+). Its function is as follows. Transfers the 4'-phosphopantetheine moiety from coenzyme A to a Ser of acyl-carrier-protein. This chain is Holo-[acyl-carrier-protein] synthase, found in Streptococcus sanguinis (strain SK36).